A 413-amino-acid polypeptide reads, in one-letter code: Multifunctional CCA protein (413 aa).

Residues G8 and R11 each contribute to the ATP site. The CTP site is built by G8 and R11. D21 and D23 together coordinate Mg(2+). The ATP site is built by R91, R143, and R146. Positions 91, 143, and 146 each coordinate CTP. Positions 232-333 (TGVHVMMVVD…VRFFERTDAL (102 aa)) constitute an HD domain.

Belongs to the tRNA nucleotidyltransferase/poly(A) polymerase family. Bacterial CCA-adding enzyme type 1 subfamily. As to quaternary structure, monomer. Can also form homodimers and oligomers. Requires Mg(2+) as cofactor. The cofactor is Ni(2+).

The enzyme catalyses a tRNA precursor + 2 CTP + ATP = a tRNA with a 3' CCA end + 3 diphosphate. The catalysed reaction is a tRNA with a 3' CCA end + 2 CTP + ATP = a tRNA with a 3' CCACCA end + 3 diphosphate. In terms of biological role, catalyzes the addition and repair of the essential 3'-terminal CCA sequence in tRNAs without using a nucleic acid template. Adds these three nucleotides in the order of C, C, and A to the tRNA nucleotide-73, using CTP and ATP as substrates and producing inorganic pyrophosphate. tRNA 3'-terminal CCA addition is required both for tRNA processing and repair. Also involved in tRNA surveillance by mediating tandem CCA addition to generate a CCACCA at the 3' terminus of unstable tRNAs. While stable tRNAs receive only 3'-terminal CCA, unstable tRNAs are marked with CCACCA and rapidly degraded. This chain is Multifunctional CCA protein, found in Burkholderia multivorans (strain ATCC 17616 / 249).